Reading from the N-terminus, the 448-residue chain is Methylenetetrahydrofolate--tRNA-(uracil-5-)-methyltransferase TrmFO (448 aa).

10-15 (GAGLAG) serves as a coordination point for FAD.

Belongs to the MnmG family. TrmFO subfamily. FAD serves as cofactor.

It localises to the cytoplasm. The catalysed reaction is uridine(54) in tRNA + (6R)-5,10-methylene-5,6,7,8-tetrahydrofolate + NADH + H(+) = 5-methyluridine(54) in tRNA + (6S)-5,6,7,8-tetrahydrofolate + NAD(+). It catalyses the reaction uridine(54) in tRNA + (6R)-5,10-methylene-5,6,7,8-tetrahydrofolate + NADPH + H(+) = 5-methyluridine(54) in tRNA + (6S)-5,6,7,8-tetrahydrofolate + NADP(+). Its function is as follows. Catalyzes the folate-dependent formation of 5-methyl-uridine at position 54 (M-5-U54) in all tRNAs. The chain is Methylenetetrahydrofolate--tRNA-(uracil-5-)-methyltransferase TrmFO from Lactococcus lactis subsp. cremoris (strain MG1363).